A 264-amino-acid polypeptide reads, in one-letter code: Potassium channel regulatory protein (264 aa).

Residues 5–74 (DLVTLNVGGR…LRNHELLLPS (70 aa)) form the BTB domain.

Can form homooligomers. Interacts with KCNA1 (via cytoplasmic N-terminal domain) and KCNA4.

It is found in the endoplasmic reticulum. Inhibits potassium fluxes in cells. May regulate Kv1 family channel proteins by retaining a fraction of channels in endomembranes. This chain is Potassium channel regulatory protein (Kcnrg), found in Mus musculus (Mouse).